Reading from the N-terminus, the 380-residue chain is Cysteine protease ATG4A (380 aa).

Cys-60 functions as the Nucleophile in the catalytic mechanism. Catalysis depends on residues Asp-262 and His-264. Residues 375-378 (FEIL) carry the LIR motif.

This sequence belongs to the peptidase C54 family.

The protein resides in the cytoplasm. It carries out the reaction [protein]-C-terminal L-amino acid-glycyl-phosphatidylethanolamide + H2O = [protein]-C-terminal L-amino acid-glycine + a 1,2-diacyl-sn-glycero-3-phosphoethanolamine. In terms of biological role, cysteine protease that plays a key role in autophagy by mediating both proteolytic activation and delipidation of ATG8 family proteins. The protease activity is required for proteolytic activation of ATG8 family proteins: cleaves the C-terminal amino acid of ATG8 proteins to reveal a C-terminal glycine. Exposure of the glycine at the C-terminus is essential for ATG8 proteins conjugation to phosphatidylethanolamine (PE) and insertion to membranes, which is necessary for autophagy. Protease activity is also required to counteract formation of high-molecular weight conjugates of ATG8 proteins (ATG8ylation): acts as a deubiquitinating-like enzyme that removes ATG8 conjugated to other proteins, such as ATG3. In addition to the protease activity, also mediates delipidation of ATG8 family proteins. Catalyzes delipidation of PE-conjugated forms of ATG8 proteins during macroautophagy. This chain is Cysteine protease ATG4A, found in Gallus gallus (Chicken).